Here is a 249-residue protein sequence, read N- to C-terminus: Solute carrier family 25 member 35 (249 aa).

Solcar repeat units follow at residues 1–90 and 152–243; these read MDFL…AEAG and QSWK…LRMV. A run of 4 helical transmembrane segments spans residues 38-58, 59-79, 154-174, and 226-249; these read TYQR…KVDG, LAAL…MNGI, WKVA…AMTP, and LGPH…TYTK.

This sequence belongs to the mitochondrial carrier (TC 2.A.29) family.

It localises to the mitochondrion inner membrane. It carries out the reaction a dicarboxylate(in) + sulfate(out) = a dicarboxylate(out) + sulfate(in). Its function is as follows. Putative antiporter that exchanges dicarboxylates and sulfur oxoanions across the inner membrane of mitochondria. In Bos taurus (Bovine), this protein is Solute carrier family 25 member 35 (SLC25A35).